A 520-amino-acid polypeptide reads, in one-letter code: Ribonuclease Y (520 aa).

A helical transmembrane segment spans residues 5–25 (ITIISSLLFLIVGLVVGSLIF). Positions 76–127 (ELRGRRTETQKAENRLLQREENLDRKDTSLSKREATLERKEESISKRQQQIE) are disordered. The 64-residue stretch at 210–273 (TVSVVTLPND…EIARIALEKL (64 aa)) folds into the KH domain. The region spanning 336–429 (VLNHSLEVSK…VAAADALSAA (94 aa)) is the HD domain.

It belongs to the RNase Y family.

Its subcellular location is the cell membrane. Endoribonuclease that initiates mRNA decay. The sequence is that of Ribonuclease Y from Listeria monocytogenes serotype 1/2a (strain 10403S).